Consider the following 500-residue polypeptide: L-arabinose isomerase (500 aa).

4 residues coordinate Mn(2+): E306, E333, H349, and H448.

It belongs to the arabinose isomerase family. Requires Mn(2+) as cofactor.

The enzyme catalyses beta-L-arabinopyranose = L-ribulose. It participates in carbohydrate degradation; L-arabinose degradation via L-ribulose; D-xylulose 5-phosphate from L-arabinose (bacterial route): step 1/3. Catalyzes the conversion of L-arabinose to L-ribulose. In Shewanella sp. (strain ANA-3), this protein is L-arabinose isomerase.